We begin with the raw amino-acid sequence, 359 residues long: Molybdenum import ATP-binding protein ModC (359 aa).

In terms of domain architecture, ABC transporter spans 1–233; that stretch reads MSGLTVSIRG…IDAESEGGGV (233 aa). 32-39 serves as a coordination point for ATP; it reads GHSGAGKT. In terms of domain architecture, Mop spans 289–355; that stretch reads AISIRNLLPV…VKAVSVDRAA (67 aa).

This sequence belongs to the ABC transporter superfamily. Molybdate importer (TC 3.A.1.8) family. In terms of assembly, the complex is composed of two ATP-binding proteins (ModC), two transmembrane proteins (ModB) and a solute-binding protein (ModA).

It localises to the cell inner membrane. It catalyses the reaction molybdate(out) + ATP + H2O = molybdate(in) + ADP + phosphate + H(+). Its function is as follows. Part of the ABC transporter complex ModABC involved in molybdenum import. Responsible for energy coupling to the transport system. This chain is Molybdenum import ATP-binding protein ModC, found in Brucella abortus (strain 2308).